A 411-amino-acid chain; its full sequence is Elongation factor Tu, apicoplast (411 aa).

In terms of domain architecture, tr-type G spans 10–214 (KPHVNIGTIG…TVDSYIEKPE (205 aa)). The segment at 19–26 (GHVDHGKT) is G1. Position 19 to 26 (19 to 26 (GHVDHGKT)) interacts with GTP. Thr-26 lines the Mg(2+) pocket. Positions 61–65 (GITIN) are G2. The segment at 82–85 (DCPG) is G3. GTP-binding positions include 82-86 (DCPGH) and 137-140 (NKED). The interval 137-140 (NKED) is G4. A G5 region spans residues 175-177 (SAL).

This sequence belongs to the TRAFAC class translation factor GTPase superfamily. Classic translation factor GTPase family. EF-Tu/EF-1A subfamily.

Its subcellular location is the plastid. The protein localises to the apicoplast. It catalyses the reaction GTP + H2O = GDP + phosphate + H(+). In terms of biological role, GTP hydrolase that promotes the GTP-dependent binding of aminoacyl-tRNA to the A-site of ribosomes during protein biosynthesis. The chain is Elongation factor Tu, apicoplast (tufA) from Theileria parva (East coast fever infection agent).